Reading from the N-terminus, the 385-residue chain is uncharacterized protein (385 aa).

This sequence belongs to the phage portal family. HK97 subfamily.

This is an uncharacterized protein from Rickettsia felis (strain ATCC VR-1525 / URRWXCal2) (Rickettsia azadi).